Reading from the N-terminus, the 210-residue chain is 7-cyano-7-deazaguanine synthase 2 (210 aa).

Residue 10 to 20 (HSGGMDSTTCL) coordinates ATP. 4 residues coordinate Zn(2+): Cys-180, Cys-193, Cys-196, and Cys-199.

The protein belongs to the QueC family. Zn(2+) is required as a cofactor.

It catalyses the reaction 7-carboxy-7-deazaguanine + NH4(+) + ATP = 7-cyano-7-deazaguanine + ADP + phosphate + H2O + H(+). Its pathway is purine metabolism; 7-cyano-7-deazaguanine biosynthesis. In terms of biological role, catalyzes the ATP-dependent conversion of 7-carboxy-7-deazaguanine (CDG) to 7-cyano-7-deazaguanine (preQ(0)). The protein is 7-cyano-7-deazaguanine synthase 2 of Rhodopseudomonas palustris (strain HaA2).